A 160-amino-acid chain; its full sequence is Probable transcriptional regulator YgiV (160 aa).

Represses expression of mcbR. The chain is Probable transcriptional regulator YgiV (ygiV) from Escherichia coli O157:H7.